The primary structure comprises 404 residues: MTVKTPVYLDYAATTPVDKRVAEKMIPYLTETFGNPASNSHAFGWTAEEAVEKARADIAALINADPKEIVFTSGATESDNLAIKGAANFYKTKGKHLITVKTEHKAVLDTMRELERQGFEVTYLGVQENGLIDLEELKAAIRDDTILISIMWVNNEIGVVQNIPAIGEICRERKIAFHVDAAQACGKVPVDVEAAKIDLLSMSAHKVYGPKGIGALYVRRKPRVRLEAQMHGGGHERGFRSGTLPTHQIVGMGEAFRIAKEELAQDTAHYLKLRDIFLKGIEGIEEVYINGDLEHRAPNNLNVSFNFVEGESLIMAVKELAVSSGSACTSASLEPSYVLRALGRNDELAHSSLRITFGRMTTEEEVQFAAELIKSKIGKLRELSPLWEMFKDGIDLNSIEWAAH.

Residues 75–76, Asn155, Gln183, and 203–205 each bind pyridoxal 5'-phosphate; these read AT and SAH. N6-(pyridoxal phosphate)lysine is present on Lys206. A pyridoxal 5'-phosphate-binding site is contributed by Thr243. The active-site Cysteine persulfide intermediate is the Cys328. Position 328 (Cys328) interacts with [2Fe-2S] cluster.

The protein belongs to the class-V pyridoxal-phosphate-dependent aminotransferase family. NifS/IscS subfamily. As to quaternary structure, homodimer. Forms a heterotetramer with IscU, interacts with other sulfur acceptors. Pyridoxal 5'-phosphate serves as cofactor.

The protein resides in the cytoplasm. The catalysed reaction is (sulfur carrier)-H + L-cysteine = (sulfur carrier)-SH + L-alanine. It functions in the pathway cofactor biosynthesis; iron-sulfur cluster biosynthesis. Its function is as follows. Master enzyme that delivers sulfur to a number of partners involved in Fe-S cluster assembly, tRNA modification or cofactor biosynthesis. Catalyzes the removal of elemental sulfur atoms from cysteine to produce alanine. Functions as a sulfur delivery protein for Fe-S cluster synthesis onto IscU, an Fe-S scaffold assembly protein, as well as other S acceptor proteins. The protein is Cysteine desulfurase IscS of Neisseria gonorrhoeae (strain ATCC 700825 / FA 1090).